The primary structure comprises 156 residues: Putative pre-16S rRNA nuclease (156 aa).

Belongs to the YqgF nuclease family.

It is found in the cytoplasm. Its function is as follows. Could be a nuclease involved in processing of the 5'-end of pre-16S rRNA. The sequence is that of Putative pre-16S rRNA nuclease from Phenylobacterium zucineum (strain HLK1).